Consider the following 110-residue polypeptide: UPF0122 protein LMOf2365_1829 (110 aa).

The protein belongs to the UPF0122 family.

In terms of biological role, might take part in the signal recognition particle (SRP) pathway. This is inferred from the conservation of its genetic proximity to ftsY/ffh. May be a regulatory protein. The sequence is that of UPF0122 protein LMOf2365_1829 from Listeria monocytogenes serotype 4b (strain F2365).